The chain runs to 72 residues: Small proline-rich protein 2D (72 aa).

The span at 1 to 11 (MSYQQQQCKQP) shows a compositional bias: low complexity. Residues 1–20 (MSYQQQQCKQPCQPPPVCPT) are disordered. Tandem repeats lie at residues 21-29 (PKCPEPCPP), 30-38 (PKCPEPCPS), and 39-47 (PKCPQPCPP). The tract at residues 21 to 47 (PKCPEPCPPPKCPEPCPSPKCPQPCPP) is 3 X 9 AA tandem repeats of P-K-C-P-[EQ]-P-C-P-[PS]. Pro residues-rich tracts occupy residues 33 to 47 (PEPCPSPKCPQPCPP) and 56 to 72 (PVTPSPPCQPKCPPKSK). A disordered region spans residues 33–72 (PEPCPSPKCPQPCPPQQCQQKYPPVTPSPPCQPKCPPKSK).

The protein belongs to the cornifin (SPRR) family.

The protein localises to the cytoplasm. Cross-linked envelope protein of keratinocytes. It is a keratinocyte protein that first appears in the cell cytosol, but ultimately becomes cross-linked to membrane proteins by transglutaminase. All that results in the formation of an insoluble envelope beneath the plasma membrane. This is Small proline-rich protein 2D (SPRR2D) from Homo sapiens (Human).